The sequence spans 184 residues: Photosystem I assembly protein Ycf4 (184 aa).

2 helical membrane passes run 22 to 42 (FCWA…GTSS) and 57 to 77 (IIFF…LFIS).

Belongs to the Ycf4 family.

The protein resides in the plastid. Its subcellular location is the chloroplast thylakoid membrane. Seems to be required for the assembly of the photosystem I complex. The chain is Photosystem I assembly protein Ycf4 from Crucihimalaya wallichii (Rock-cress).